The primary structure comprises 91 residues: Aspartyl/glutamyl-tRNA(Asn/Gln) amidotransferase subunit C (91 aa).

Positions 68 to 91 (LDQDDALANAPETEDGRFKGPNVS) are disordered.

This sequence belongs to the GatC family. As to quaternary structure, heterotrimer of A, B and C subunits.

It catalyses the reaction L-glutamyl-tRNA(Gln) + L-glutamine + ATP + H2O = L-glutaminyl-tRNA(Gln) + L-glutamate + ADP + phosphate + H(+). It carries out the reaction L-aspartyl-tRNA(Asn) + L-glutamine + ATP + H2O = L-asparaginyl-tRNA(Asn) + L-glutamate + ADP + phosphate + 2 H(+). Its function is as follows. Allows the formation of correctly charged Asn-tRNA(Asn) or Gln-tRNA(Gln) through the transamidation of misacylated Asp-tRNA(Asn) or Glu-tRNA(Gln) in organisms which lack either or both of asparaginyl-tRNA or glutaminyl-tRNA synthetases. The reaction takes place in the presence of glutamine and ATP through an activated phospho-Asp-tRNA(Asn) or phospho-Glu-tRNA(Gln). In Halobacterium salinarum (strain ATCC 29341 / DSM 671 / R1), this protein is Aspartyl/glutamyl-tRNA(Asn/Gln) amidotransferase subunit C.